A 735-amino-acid chain; its full sequence is MIP-related peptides (735 aa).

The first 20 residues, 1-20, serve as a signal peptide directing secretion; sequence MCTRPGLAALLVLMTSCASS. Positions 21–135 are excised as a propeptide; that stretch reads FSRADTQSAS…EDSDTKVDTR (115 aa). The segment covering 33–65 has biased composition (low complexity); the sequence is ALSAASADAQAARQQQEQHLVAQQQQQQQQQQQ. Disordered regions lie at residues 33–212 and 229–251; these read ALSA…FGKK and FGKKSSGESAGDSGYISVASRGS. Composition is skewed to polar residues over residues 66-76 and 101-125; these read HSNNNEPQQRA and PVSQPDLSPDFSNPMGSSLSQSGTP. Phenylalanine amide is present on residues F142, F153, and F164. The segment covering 142–159 has biased composition (basic residues); that stretch reads FGKKRGQAPRFFGKKRAM. Positions 168-184 are excised as a propeptide; it reads SSEFPTSNSEQLALDTR. The residue at position 190 (F190) is a Phenylalanine amide. Positions 194–203 are excised as a propeptide; sequence SFPESNREQR. Over residues 194-204 the composition is skewed to basic and acidic residues; it reads SFPESNREQRG. A phenylalanine amide mark is found at F209 and F229. The propeptide at 214 to 229 is linker peptide; it reads FDENVDIDERAAPRFF. The propeptide occupies 233-249; that stretch reads SSGESAGDSGYISVASR. F255 is modified (phenylalanine amide). A propeptide spans 259–267 (linker peptide); sequence QDDDIMIAA. F274 is subject to Phenylalanine amide. The propeptide at 279-287 is linker peptide; the sequence is SDDNVALDL. F294 is modified (phenylalanine amide). The propeptide occupies 298–311; that stretch reads QSSDLDDEISVALR. F317 is modified (phenylalanine amide). Positions 321 to 332 are excised as a propeptide; that stretch reads RADDEDILLGER. Phenylalanine amide is present on F338. A propeptide spanning residues 342–353 is cleaved from the precursor; the sequence is RANDENISFSLR. 2 disordered regions span residues 352–373 and 381–400; these read LRGSPRFFGKKRSDESDDDNIG and RFFGKKRSDETDDENIGLMA. Residue F359 is modified to Phenylalanine amide. Positions 363–377 are excised as a propeptide; the sequence is RSDESDDDNIGLVAR. Phenylalanine amide is present on F383. The propeptide occupies 387-401; the sequence is RSDETDDENIGLMAR. Residue F407 is modified to Phenylalanine amide. Positions 412–426 are cleaved as a propeptide — linker peptide; that stretch reads SDGLDDGGNIIDVAT. The segment at 430–464 is disordered; it reads PRFFGKKRSNSDSSDKSSDSALSSSESGRQTRQAP. The residue at position 433 (F433) is a Phenylalanine amide. Positions 437-461 are excised as a propeptide; sequence RSNSDSSDKSSDSALSSSESGRQTR. A compositionally biased stretch (basic and acidic residues) spans 438–447; the sequence is SNSDSSDKSS. Residue Q462 is modified to Pyrrolidone carboxylic acid. Residue F467 is modified to Phenylalanine amide. The propeptide occupies 471 to 493; that stretch reads YVDEHHVSKRAAATAFPLIIEAR. The residue at position 494 (Q494) is a Pyrrolidone carboxylic acid. A Phenylalanine amide modification is found at F499. The propeptide occupies 503–509; the sequence is EYRYPPR. An Isoleucine amide modification is found at I515. A propeptide spanning residues 519 to 546 is cleaved from the precursor; that stretch reads FSLYRSPGKYSLSSPYMSAKEFKETFRR. A Methionine amide modification is found at M552. A propeptide spanning residues 556 to 585 is cleaved from the precursor; it reads TAELNEEGSDDFTNDDTDDENEYDETVLFK. Valine amide is present on V592. At L601 the chain carries Leucine amide. At I610 the chain carries Isoleucine amide. A Valine amide modification is found at V619. I628 is subject to Isoleucine amide. Positions 632–661 are cleaved as a propeptide — linker peptide; it reads DLDWYQKALCAEADILELDDCADFLGNDDV. Q664 is subject to Pyrrolidone carboxylic acid. I669 bears the Isoleucine amide mark. Positions 674-705 are cleaved as a propeptide — linker peptide; the sequence is GEDVSERDYAQLLEALSRLQAIKQIKARIQNE. V714 is modified (valine amide). Residues 715 to 735 constitute a propeptide that is removed on maturation; sequence GRRSEYNLGPFDEFVDESMER.

As to expression, expressed in the CNS and peripheral tissues (the digestive tract, vasculature, and the reproductive organs).

The protein localises to the secreted. Functionally, has some structural and functional features similar to vertebrate opioid peptides. AMRPs are inhibitory on Aplysia esophagus, penis retractor muscle, and body wall muscle. The protein is MIP-related peptides (MRP) of Aplysia californica (California sea hare).